The sequence spans 262 residues: Phosphatidylglycerol--prolipoprotein diacylglyceryl transferase (262 aa).

A run of 3 helical transmembrane segments spans residues 17 to 37 (LKVH…WILA), 57 to 77 (LVFY…ALFY), and 92 to 112 (IWEG…AMYA). R140 lines the a 1,2-diacyl-sn-glycero-3-phospho-(1'-sn-glycerol) pocket. 2 consecutive transmembrane segments (helical) span residues 200-220 (MAVS…VEFV) and 234-254 (WLTM…VLLA).

This sequence belongs to the Lgt family.

The protein localises to the cell inner membrane. It catalyses the reaction L-cysteinyl-[prolipoprotein] + a 1,2-diacyl-sn-glycero-3-phospho-(1'-sn-glycerol) = an S-1,2-diacyl-sn-glyceryl-L-cysteinyl-[prolipoprotein] + sn-glycerol 1-phosphate + H(+). Its pathway is protein modification; lipoprotein biosynthesis (diacylglyceryl transfer). In terms of biological role, catalyzes the transfer of the diacylglyceryl group from phosphatidylglycerol to the sulfhydryl group of the N-terminal cysteine of a prolipoprotein, the first step in the formation of mature lipoproteins. The polypeptide is Phosphatidylglycerol--prolipoprotein diacylglyceryl transferase (Methylococcus capsulatus (strain ATCC 33009 / NCIMB 11132 / Bath)).